Here is a 147-residue protein sequence, read N- to C-terminus: Hemoglobin subunit epsilon (147 aa).

In terms of domain architecture, Globin spans 3–147 (HWSAEEKQLI…VAHALPRKYH (145 aa)). Heme b is bound by residues His-64 and His-93.

It belongs to the globin family. Heterotetramer of two epsilon chains and two alpha chains. Red blood cells.

In terms of biological role, beta-type chain found in early embryos. This is Hemoglobin subunit epsilon (HBE) from Cairina moschata (Muscovy duck).